The sequence spans 1063 residues: Probable hemoglobin and hemoglobin-haptoglobin-binding protein 1 (1063 aa).

An N-terminal signal peptide occupies residues 1 to 24 (MTNFKFSLLACSIAFALNASIAYA). A run of 7 repeats spans residues 26-29 (QPTN), 30-33 (QPTN), 34-37 (QPTN), 38-41 (QPTN), 42-45 (QPTN), 46-49 (QPTN), and 50-53 (QPTN). The interval 26-53 (QPTNQPTNQPTNQPTNQPTNQPTNQPTN) is 7 X 4 AA tandem repeats of Q-P-T-N. Residues 28–55 (TNQPTNQPTNQPTNQPTNQPTNQPTNQN) show a composition bias toward low complexity. The segment at 28–57 (TNQPTNQPTNQPTNQPTNQPTNQPTNQNSN) is disordered. The TonB box signature appears at 63–70 (EQINVSGS). The TBDR plug domain maps to 66–200 (NVSGSSENIN…LGGSVIFETK (135 aa)). In terms of domain architecture, TBDR beta-barrel spans 208–1063 (DKDYYLSYKR…NYRMSVQFEF (856 aa)). Residues 1046–1063 (NRFYAPGRNYRMSVQFEF) carry the TonB C-terminal box motif.

It belongs to the TonB-dependent receptor family. Hemoglobin/haptoglobin binding protein subfamily.

Its subcellular location is the cell outer membrane. Acts as a receptor for hemoglobin or the hemoglobin/haptoglobin complex of the human host and is required for heme uptake. The polypeptide is Probable hemoglobin and hemoglobin-haptoglobin-binding protein 1 (Haemophilus influenzae (strain ATCC 51907 / DSM 11121 / KW20 / Rd)).